Consider the following 116-residue polypeptide: Putative transmembrane protein ORF116 (116 aa).

Helical transmembrane passes span 20 to 40 (IVTL…AYAL), 53 to 73 (LLGG…TNSI), and 76 to 96 (FRGA…DVIN).

Its subcellular location is the host membrane. The sequence is that of Putative transmembrane protein ORF116 from Acidianus bottle-shaped virus (isolate Italy/Pozzuoli) (ABV).